The following is a 445-amino-acid chain: Exodeoxyribonuclease 7 large subunit (445 aa).

Belongs to the XseA family. As to quaternary structure, heterooligomer composed of large and small subunits.

Its subcellular location is the cytoplasm. It catalyses the reaction Exonucleolytic cleavage in either 5'- to 3'- or 3'- to 5'-direction to yield nucleoside 5'-phosphates.. Bidirectionally degrades single-stranded DNA into large acid-insoluble oligonucleotides, which are then degraded further into small acid-soluble oligonucleotides. The polypeptide is Exodeoxyribonuclease 7 large subunit (Shewanella pealeana (strain ATCC 700345 / ANG-SQ1)).